A 261-amino-acid chain; its full sequence is Cytochrome c oxidase subunit 3 (261 aa).

The Mitochondrial matrix portion of the chain corresponds to 1–15 (MTHQTHAYHMVNPSP). Residues 16–34 (WPLTGALSALLMTSGLAMW) traverse the membrane as a helical segment. Residues 35–40 (FHFNST) are Mitochondrial intermembrane-facing. Residues 41–66 (ILLMIGLTTNTLTMYQWWRDVIREST) traverse the membrane as a helical segment. The Mitochondrial matrix segment spans residues 67–72 (FQGHHT). The helical transmembrane segment at 73–105 (PTVQKGLRYGMILFIISEVLFFTGFFWAFYHSS) threads the bilayer. The Mitochondrial intermembrane segment spans residues 106-128 (LAPTPELGGCWPPTGIHPLNPLE). The helical transmembrane segment at 129-152 (VPLLNTSVLLASGVSITWAHHSLM) threads the bilayer. The Mitochondrial matrix portion of the chain corresponds to 153-155 (EGN). A helical transmembrane segment spans residues 156–183 (RYPMLQALFITIALGVYFTLLQASEYYE). Over 184–190 (APFTISD) the chain is Mitochondrial intermembrane. The chain crosses the membrane as a helical span at residues 191 to 223 (GVYGSTFFVATGFHGLHVIIGSTFLIVCFFRQL). The Mitochondrial matrix portion of the chain corresponds to 224–232 (KFHFTSNHH). A helical transmembrane segment spans residues 233–256 (FGFEAAAWYWHFVDVVWLFLYVSI). Residues 257–261 (YWWGS) are Mitochondrial intermembrane-facing.

Belongs to the cytochrome c oxidase subunit 3 family. As to quaternary structure, component of the cytochrome c oxidase (complex IV, CIV), a multisubunit enzyme composed of 14 subunits. The complex is composed of a catalytic core of 3 subunits MT-CO1, MT-CO2 and MT-CO3, encoded in the mitochondrial DNA, and 11 supernumerary subunits COX4I, COX5A, COX5B, COX6A, COX6B, COX6C, COX7A, COX7B, COX7C, COX8 and NDUFA4, which are encoded in the nuclear genome. The complex exists as a monomer or a dimer and forms supercomplexes (SCs) in the inner mitochondrial membrane with NADH-ubiquinone oxidoreductase (complex I, CI) and ubiquinol-cytochrome c oxidoreductase (cytochrome b-c1 complex, complex III, CIII), resulting in different assemblies (supercomplex SCI(1)III(2)IV(1) and megacomplex MCI(2)III(2)IV(2)).

The protein resides in the mitochondrion inner membrane. It catalyses the reaction 4 Fe(II)-[cytochrome c] + O2 + 8 H(+)(in) = 4 Fe(III)-[cytochrome c] + 2 H2O + 4 H(+)(out). In terms of biological role, component of the cytochrome c oxidase, the last enzyme in the mitochondrial electron transport chain which drives oxidative phosphorylation. The respiratory chain contains 3 multisubunit complexes succinate dehydrogenase (complex II, CII), ubiquinol-cytochrome c oxidoreductase (cytochrome b-c1 complex, complex III, CIII) and cytochrome c oxidase (complex IV, CIV), that cooperate to transfer electrons derived from NADH and succinate to molecular oxygen, creating an electrochemical gradient over the inner membrane that drives transmembrane transport and the ATP synthase. Cytochrome c oxidase is the component of the respiratory chain that catalyzes the reduction of oxygen to water. Electrons originating from reduced cytochrome c in the intermembrane space (IMS) are transferred via the dinuclear copper A center (CU(A)) of subunit 2 and heme A of subunit 1 to the active site in subunit 1, a binuclear center (BNC) formed by heme A3 and copper B (CU(B)). The BNC reduces molecular oxygen to 2 water molecules using 4 electrons from cytochrome c in the IMS and 4 protons from the mitochondrial matrix. The polypeptide is Cytochrome c oxidase subunit 3 (MT-CO3) (Raphicerus campestris (Steenbok)).